The chain runs to 101 residues: NADH-quinone oxidoreductase subunit K (101 aa).

The next 3 helical transmembrane spans lie at 2 to 22, 28 to 48, and 62 to 82; these read TLSA…YGAL, VIVL…FVAF, and FALF…AALI.

It belongs to the complex I subunit 4L family. NDH-1 is composed of 14 different subunits. Subunits NuoA, H, J, K, L, M, N constitute the membrane sector of the complex.

Its subcellular location is the cell membrane. The catalysed reaction is a quinone + NADH + 5 H(+)(in) = a quinol + NAD(+) + 4 H(+)(out). NDH-1 shuttles electrons from NADH, via FMN and iron-sulfur (Fe-S) centers, to quinones in the respiratory chain. The immediate electron acceptor for the enzyme in this species is believed to be a menaquinone. Couples the redox reaction to proton translocation (for every two electrons transferred, four hydrogen ions are translocated across the cytoplasmic membrane), and thus conserves the redox energy in a proton gradient. The protein is NADH-quinone oxidoreductase subunit K of Geobacillus kaustophilus (strain HTA426).